An 82-amino-acid chain; its full sequence is MPSAPHYSSKYYDDKYEYRHVILPSEISSLIPRDVLLTEDECRKLGIRQSDGWEHYANHKPEPHILLFRRPHSGIPNDVDYL.

It belongs to the CKS family. In terms of assembly, forms a homohexamer that can probably bind six kinase subunits.

In terms of biological role, binds to the catalytic subunit of the cyclin dependent kinases and is essential for their biological function. The chain is Cyclin-dependent kinases regulatory subunit (cks1) from Dictyostelium discoideum (Social amoeba).